Here is a 372-residue protein sequence, read N- to C-terminus: Chorismate synthase (372 aa).

Arginine 48 contacts NADP(+). Residues 125 to 127 (RSS), glycine 285, 300 to 304 (KPTPS), and arginine 327 contribute to the FMN site.

It belongs to the chorismate synthase family. It depends on FMNH2 as a cofactor.

It carries out the reaction 5-O-(1-carboxyvinyl)-3-phosphoshikimate = chorismate + phosphate. The protein operates within metabolic intermediate biosynthesis; chorismate biosynthesis; chorismate from D-erythrose 4-phosphate and phosphoenolpyruvate: step 7/7. Functionally, catalyzes the anti-1,4-elimination of the C-3 phosphate and the C-6 proR hydrogen from 5-enolpyruvylshikimate-3-phosphate (EPSP) to yield chorismate, which is the branch point compound that serves as the starting substrate for the three terminal pathways of aromatic amino acid biosynthesis. This reaction introduces a second double bond into the aromatic ring system. The polypeptide is Chorismate synthase (Methanocella arvoryzae (strain DSM 22066 / NBRC 105507 / MRE50)).